A 1293-amino-acid chain; its full sequence is Galactose/N-acetyl-D-galactosamine lectin heavy subunit 1 (1293 aa).

The N-terminal stretch at 1 to 15 (MKLLLLNILLLCCLA) is a signal peptide. Over 16–1234 (DKLNEFSADI…NNVGAIAAAT (1219 aa)) the chain is Extracellular. Residues Asn-95, Asn-198, Asn-234, Asn-261, Asn-337, Asn-377, Asn-390, Asn-468, Asn-487, Asn-643, Asn-659, Asn-890, Asn-992, Asn-1138, Asn-1204, and Asn-1214 are each glycosylated (N-linked (GlcNAc...) asparagine). Residues 1235 to 1255 (TVAVVVVAVVVALIVVSIGLF) traverse the membrane as a helical segment. Topologically, residues 1256-1293 (KTYQLVSSAMKNAITITNENAEYVGADNEATNAATFNG) are cytoplasmic.

In terms of assembly, heterodimer composed of a 170 kDa heavy subunit (hgl) and a 31/35 kDa light subunit (lgl); disulfide-linked. In terms of processing, N-glycosylated.

The protein localises to the cell membrane. In terms of biological role, lectin which binds galactose and N-acetyl-D-galactosamine of host glycoproteins and thus mediates adhesion to host cells. Mediates adherence to host colonic mucins, an essential step for pathogenic tissue invasion. The protein is Galactose/N-acetyl-D-galactosamine lectin heavy subunit 1 of Entamoeba histolytica (strain ATCC 30459 / HM-1:IMSS / ABRM).